A 313-amino-acid chain; its full sequence is Transcription initiation factor IIB 2 (313 aa).

The TFIIB-type zinc-finger motif lies at 13–44; it reads APKRCPECHSEHLIRDYEHGELICADCGAVIE. 4 residues coordinate Zn(2+): Cys17, Cys20, Cys36, and Cys39. Repeat copies occupy residues 130–213 and 224–305.

The protein belongs to the TFIIB family.

Functionally, stabilizes TBP binding to an archaeal box-A promoter. Also responsible for recruiting RNA polymerase II to the pre-initiation complex (DNA-TBP-TFIIB). The polypeptide is Transcription initiation factor IIB 2 (Thermoplasma volcanium (strain ATCC 51530 / DSM 4299 / JCM 9571 / NBRC 15438 / GSS1)).